Here is a 465-residue protein sequence, read N- to C-terminus: uncharacterized protein (465 aa).

One can recognise a TRAM domain in the interval glycine 13–glutamate 71. 4 residues coordinate [4Fe-4S] cluster: cysteine 84, cysteine 90, cysteine 93, and cysteine 171. The S-adenosyl-L-methionine site is built by glutamine 294, tyrosine 324, glutamate 345, and aspartate 391. Residue cysteine 418 is the Nucleophile of the active site.

Belongs to the class I-like SAM-binding methyltransferase superfamily. RNA M5U methyltransferase family.

This is an uncharacterized protein from Parasynechococcus marenigrum (strain WH8102).